The primary structure comprises 112 residues: uncharacterized protein (112 aa).

Residues 70-112 (GLYRGRRPPGRDAARPTTAILFAQGRPPLLDQRAPTRRGSHQR) form a disordered region.

This is an uncharacterized protein from Homo sapiens (Human).